The chain runs to 343 residues: MTSQITLSLDAMGGDHGPSVVVPAALQALERHPHLHLVLVGQEETLREHLQAGNQGDSGRLSIRHCTQVVAMDEPPSHALRSKKDSSMRVALEMVKTGEADGSVSAGNTGALMATARYLLKTLPGIDRPAIMSTIPTLGGATHMLDLGANVDCTGEHLFQFGVMGAVAAEAVHGLERPRVGLLNIGEEEIKGNEQVKHAAELLLESEEIHYAGYIEGDGIYKGEADVVVCDGFVGNVALKTSEGVATLISEYMRMEFRRNLLSKIAGVVALPVLRALRRRIDPRQYNGASLLGLRGVALKSHGSADSFAFGRAIDTAVREAEQGVPDLINARIERLLGAKEGA.

This sequence belongs to the PlsX family. In terms of assembly, homodimer. Probably interacts with PlsY.

It is found in the cytoplasm. The enzyme catalyses a fatty acyl-[ACP] + phosphate = an acyl phosphate + holo-[ACP]. It functions in the pathway lipid metabolism; phospholipid metabolism. In terms of biological role, catalyzes the reversible formation of acyl-phosphate (acyl-PO(4)) from acyl-[acyl-carrier-protein] (acyl-ACP). This enzyme utilizes acyl-ACP as fatty acyl donor, but not acyl-CoA. This is Phosphate acyltransferase from Halorhodospira halophila (strain DSM 244 / SL1) (Ectothiorhodospira halophila (strain DSM 244 / SL1)).